The following is a 680-amino-acid chain: DNA-directed RNA polymerase subunit beta' (680 aa).

Positions 69, 71, 87, and 90 each coordinate Zn(2+). Residues Asp489, Asp491, and Asp493 each contribute to the Mg(2+) site.

Belongs to the RNA polymerase beta' chain family. RpoC1 subfamily. In plastids the minimal PEP RNA polymerase catalytic core is composed of four subunits: alpha, beta, beta', and beta''. When a (nuclear-encoded) sigma factor is associated with the core the holoenzyme is formed, which can initiate transcription. Mg(2+) serves as cofactor. Zn(2+) is required as a cofactor.

The protein resides in the plastid. It is found in the chloroplast. It carries out the reaction RNA(n) + a ribonucleoside 5'-triphosphate = RNA(n+1) + diphosphate. Its function is as follows. DNA-dependent RNA polymerase catalyzes the transcription of DNA into RNA using the four ribonucleoside triphosphates as substrates. This chain is DNA-directed RNA polymerase subunit beta', found in Ceratophyllum demersum (Rigid hornwort).